Here is a 253-residue protein sequence, read N- to C-terminus: Proteasome subunit alpha (253 aa).

The disordered stretch occupies residues 229–253; sequence ADESQSYIDDIEDAADDSDDDDDEE. Acidic residues predominate over residues 237 to 253; the sequence is DDIEDAADDSDDDDDEE.

The protein belongs to the peptidase T1A family. As to quaternary structure, the 20S proteasome core is composed of 14 alpha and 14 beta subunits that assemble into four stacked heptameric rings, resulting in a barrel-shaped structure. The two inner rings, each composed of seven catalytic beta subunits, are sandwiched by two outer rings, each composed of seven alpha subunits. The catalytic chamber with the active sites is on the inside of the barrel. Has a gated structure, the ends of the cylinder being occluded by the N-termini of the alpha-subunits. Is capped at one or both ends by the proteasome regulatory ATPase, PAN.

It localises to the cytoplasm. The formation of the proteasomal ATPase PAN-20S proteasome complex, via the docking of the C-termini of PAN into the intersubunit pockets in the alpha-rings, triggers opening of the gate for substrate entry. Interconversion between the open-gate and close-gate conformations leads to a dynamic regulation of the 20S proteasome proteolysis activity. In terms of biological role, component of the proteasome core, a large protease complex with broad specificity involved in protein degradation. The polypeptide is Proteasome subunit alpha (Halobacterium salinarum (strain ATCC 29341 / DSM 671 / R1)).